A 188-amino-acid chain; its full sequence is dCTP deaminase (188 aa).

DCTP-binding positions include 111–116 (KSTYAR), 135–137 (TLE), Gln-156, Tyr-170, and Gln-180. Glu-137 (proton donor/acceptor) is an active-site residue.

It belongs to the dCTP deaminase family. In terms of assembly, homotrimer.

It carries out the reaction dCTP + H2O + H(+) = dUTP + NH4(+). It participates in pyrimidine metabolism; dUMP biosynthesis; dUMP from dCTP (dUTP route): step 1/2. Its function is as follows. Catalyzes the deamination of dCTP to dUTP. This is dCTP deaminase from Azotobacter vinelandii (strain DJ / ATCC BAA-1303).